A 408-amino-acid chain; its full sequence is Biphenyl dioxygenase system ferredoxin--NAD(+) reductase component (408 aa).

4-35 serves as a coordination point for FAD; sequence TIAIIGAGLAGSTAARALRAQGYEGRIHLLGD. 145-173 is an NAD(+) binding site; it reads SLVIVGGGLIGCEVATTARKLSVHVTILE.

It belongs to the bacterial ring-hydroxylating dioxygenase ferredoxin reductase family. In terms of assembly, this dioxygenase system consists of four proteins: the two subunits of the hydroxylase component (BphA and BphE), a ferredoxin (BphF) and a ferredoxin reductase (BphG). The cofactor is FAD.

It catalyses the reaction 2 reduced [2Fe-2S]-[ferredoxin] + NAD(+) + H(+) = 2 oxidized [2Fe-2S]-[ferredoxin] + NADH. It participates in xenobiotic degradation; biphenyl degradation. In terms of biological role, part of the electron transfer component of biphenyl dioxygenase, transfers electrons from ferredoxin (BphF) to NADH. The chain is Biphenyl dioxygenase system ferredoxin--NAD(+) reductase component (bphG) from Paraburkholderia xenovorans (strain LB400).